A 146-amino-acid polypeptide reads, in one-letter code: Aminoglycoside N(6')-acetyltransferase type 1 (146 aa).

One can recognise an N-acetyltransferase domain in the interval Met1–Gly146. Substrate contacts are provided by Trp21, Tyr66, Glu79, and Asp115. Asn120 is a binding site for acetyl-CoA. Residue Glu136 coordinates substrate.

Homodimer.

It carries out the reaction kanamycin B + acetyl-CoA = N(6')-acetylkanamycin B + CoA + H(+). Catalyzes the transfer of an acetyl group from acetyl-CoA to the 6'-amino group of aminoglycoside molecules conferring resistance to antibiotics containing the purpurosamine ring including amikacin, tobramycin, netilmicin, isepamicin and sisomicin. The chain is Aminoglycoside N(6')-acetyltransferase type 1 from Serratia marcescens.